A 135-amino-acid chain; its full sequence is Congerin-1 (135 aa).

Residue Ser-1 is modified to N-acetylserine. A Galectin domain is found at 3-135 (GLQVKNFDFT…GDARLTLVKE (133 aa)). An a beta-D-galactoside-binding site is contributed by 70–76 (WETEQRS).

In terms of assembly, homodimer.

Its function is as follows. This protein binds beta-galactoside. Its physiological function is not yet known. The sequence is that of Congerin-1 from Conger myriaster (Conger eel).